A 55-amino-acid polypeptide reads, in one-letter code: Large ribosomal subunit protein bL33 (55 aa).

It belongs to the bacterial ribosomal protein bL33 family.

The sequence is that of Large ribosomal subunit protein bL33 from Chelativorans sp. (strain BNC1).